A 156-amino-acid chain; its full sequence is MQHSQVSPNARQQLAETVVLNKARLGLSWQDLADGTGLALTFVTAALLGQHALPEAAARKVAAQLGLDDDAVLLLQSIPLRGSIPGGIPSDPTIYRFYEMLQVYGSTLKALVHEQFGDGIISAINFKLDIKKVEDPEGGSRAVITLDGKYLPTKPF.

Active-site residues include Arg96, Glu99, and Ser122.

This sequence belongs to the cyanase family.

It carries out the reaction cyanate + hydrogencarbonate + 3 H(+) = NH4(+) + 2 CO2. Its function is as follows. Catalyzes the reaction of cyanate with bicarbonate to produce ammonia and carbon dioxide. The polypeptide is Cyanate hydratase (Pseudomonas aeruginosa (strain LESB58)).